A 989-amino-acid chain; its full sequence is Autotransporter adhesin/invasin TibA (989 aa).

Residues Met-1 to Ala-54 form the signal peptide. O-alpha-linked (D-glycero-D-manno-heptose) serine glycosylation is found at Ser-74, Ser-86, Ser-93, Ser-94, Ser-97, Ser-100, Ser-112, Ser-113, Ser-116, Ser-119, Ser-124, Ser-131, Ser-132, and Ser-135. Repeat copies occupy residues Thr-82 to Ser-100, Thr-101 to Ser-119, Ser-120 to Asn-138, Thr-139 to Gly-157, Thr-158 to Ser-176, Ala-177 to Ala-195, Thr-196 to Asp-214, Thr-215 to Lys-233, Thr-234 to Gly-251, Thr-252 to Asn-270, Thr-271 to Glu-289, and Thr-290 to Lys-308. A 12 X 19 AA approximate repeats region spans residues Thr-82 to Lys-308. Over residues His-110 to Asn-123 the composition is skewed to polar residues. The segment at His-110 to Arg-146 is disordered. A compositionally biased stretch (low complexity) spans Ser-124–Ser-135. The span at Ala-136–Arg-146 shows a compositional bias: polar residues. Residues Ser-151, Ser-154, Ser-162, Ser-170, Ser-176, Ser-181, Ser-188, Ser-189, Ser-200, Ser-226, Ser-227, Ser-230, Ser-238, Ser-248, Ser-263, Ser-264, Ser-275, Ser-294, Ser-305, Ser-313, and Ser-322 are each glycosylated (O-alpha-linked (D-glycero-D-manno-heptose) serine). Residues Trp-623–Thr-686 are disordered. Residues Thr-629 to Asn-638 show a composition bias toward pro residues. Tandem repeats lie at residues Pro-639 to Asn-643, Pro-644 to Asn-648, Pro-649 to Asn-653, Pro-654 to Asn-658, Pro-659 to Asn-663, Pro-664 to Lys-668, Pro-669 to Lys-673, and Pro-674 to Thr-678. Residues Pro-639–Gly-667 show a composition bias toward low complexity. An 8 X 5 AA repeats of P-[DG]-[AGT]-[DGA]-[NKT] region spans residues Pro-639 to Thr-678. The Autotransporter domain occupies Asn-721–Phe-989.

As to quaternary structure, homohexamer. In terms of processing, glycosylated by TibC. Glycosylation is required for adhesion to and invasion of host cells. Glycosylation is dispensable for bacterial autoaggregation and biofilm formation.

Its subcellular location is the cell outer membrane. In terms of biological role, mediates both adhesion to and invasion of human intestine epithelial cells. Also mediates bacterial cell aggregation via intercellular TibA-TibA interaction. Enhances biofilm formation. The chain is Autotransporter adhesin/invasin TibA from Escherichia coli O78:H11 (strain H10407 / ETEC).